Reading from the N-terminus, the 441-residue chain is Proline--tRNA ligase (441 aa).

The protein belongs to the class-II aminoacyl-tRNA synthetase family. ProS type 2 subfamily. As to quaternary structure, homodimer.

The protein resides in the cytoplasm. It catalyses the reaction tRNA(Pro) + L-proline + ATP = L-prolyl-tRNA(Pro) + AMP + diphosphate. Functionally, catalyzes the attachment of proline to tRNA(Pro) in a two-step reaction: proline is first activated by ATP to form Pro-AMP and then transferred to the acceptor end of tRNA(Pro). This chain is Proline--tRNA ligase, found in Methylobacterium radiotolerans (strain ATCC 27329 / DSM 1819 / JCM 2831 / NBRC 15690 / NCIMB 10815 / 0-1).